The sequence spans 154 residues: Large ribosomal subunit protein uL13 (154 aa).

Belongs to the universal ribosomal protein uL13 family. In terms of assembly, part of the 50S ribosomal subunit.

Functionally, this protein is one of the early assembly proteins of the 50S ribosomal subunit, although it is not seen to bind rRNA by itself. It is important during the early stages of 50S assembly. The chain is Large ribosomal subunit protein uL13 from Brucella suis (strain ATCC 23445 / NCTC 10510).